The chain runs to 545 residues: Zinc finger protein with KRAB and SCAN domains 4 (545 aa).

Positions 1–22 (MAREPRKNAALDAQSAEDQTGL) are disordered. Glycyl lysine isopeptide (Lys-Gly) (interchain with G-Cter in SUMO2) cross-links involve residues K26 and K29. The disordered stretch occupies residues 34–55 (ALTAEVRAPCSPARGPERSRQR). An SCAN box domain is found at 53–135 (RQRFRGFRYP…VLLEYLERQL (83 aa)). Glycyl lysine isopeptide (Lys-Gly) (interchain with G-Cter in SUMO2) cross-links involve residues K178 and K222. Positions 221 to 317 (LKMEDVALTL…QRKQKNAIGS (97 aa)) constitute a KRAB domain. C2H2-type zinc fingers lie at residues 320–342 (HYCHECGKSFAQSSGLTKHRRIH), 348–370 (YECEDCGKTFIGSSALVIHQRVH), 376–398 (YECEECGKVFSHSSNLIKHQRTH), 404–426 (YECDDCGKTFSQSCSLLEHHKIH), and 432–454 (YQCNMCGKAFRRNSHLLRHQRIH). Residues 455–467 (GDKNVQNPEHGES) show a composition bias toward basic and acidic residues. The disordered stretch occupies residues 455-480 (GDKNVQNPEHGESWESQGRTESQWEN). A compositionally biased stretch (polar residues) spans 468 to 480 (WESQGRTESQWEN). 2 C2H2-type zinc fingers span residues 487–509 (YKCNECERSFTRNRSLIEHQKIH) and 515–537 (YQCDTCGKGFTRTSYLVQHQRSH).

This sequence belongs to the krueppel C2H2-type zinc-finger protein family. As to expression, expressed in adult heart, brain, placenta, lung and kidney, but not in adult liver and skeletal muscle. In 17-day old embryo, detected in liver, skeletal muscle, brain, heart and small intestine.

It localises to the nucleus. May be involved in the transcriptional activation of MDM2 and EP300 genes. The polypeptide is Zinc finger protein with KRAB and SCAN domains 4 (ZKSCAN4) (Homo sapiens (Human)).